A 271-amino-acid chain; its full sequence is Formamidopyrimidine-DNA glycosylase (271 aa).

Pro-2 serves as the catalytic Schiff-base intermediate with DNA. Glu-3 serves as the catalytic Proton donor. The Proton donor; for beta-elimination activity role is filled by Lys-58. Residues His-91 and Arg-109 each coordinate DNA. The segment at 236-270 (FVYGREGLACRVCATPVRRVVIGQRSTFFCPRCQR) adopts an FPG-type zinc-finger fold. Arg-260 acts as the Proton donor; for delta-elimination activity in catalysis.

This sequence belongs to the FPG family. In terms of assembly, monomer. Zn(2+) is required as a cofactor.

It catalyses the reaction Hydrolysis of DNA containing ring-opened 7-methylguanine residues, releasing 2,6-diamino-4-hydroxy-5-(N-methyl)formamidopyrimidine.. It carries out the reaction 2'-deoxyribonucleotide-(2'-deoxyribose 5'-phosphate)-2'-deoxyribonucleotide-DNA = a 3'-end 2'-deoxyribonucleotide-(2,3-dehydro-2,3-deoxyribose 5'-phosphate)-DNA + a 5'-end 5'-phospho-2'-deoxyribonucleoside-DNA + H(+). Its function is as follows. Involved in base excision repair of DNA damaged by oxidation or by mutagenic agents. Acts as a DNA glycosylase that recognizes and removes damaged bases. Has a preference for oxidized purines, such as 7,8-dihydro-8-oxoguanine (8-oxoG). Has AP (apurinic/apyrimidinic) lyase activity and introduces nicks in the DNA strand. Cleaves the DNA backbone by beta-delta elimination to generate a single-strand break at the site of the removed base with both 3'- and 5'-phosphates. This Aromatoleum aromaticum (strain DSM 19018 / LMG 30748 / EbN1) (Azoarcus sp. (strain EbN1)) protein is Formamidopyrimidine-DNA glycosylase.